The primary structure comprises 257 residues: Uracil phosphoribosyltransferase (257 aa).

5-phospho-alpha-D-ribose 1-diphosphate contacts are provided by residues R77, R102, and D129 to S137. Uracil contacts are provided by residues I192 and G197–A199. D198 provides a ligand contact to 5-phospho-alpha-D-ribose 1-diphosphate. Positions Q203–A257 are disordered. 2 stretches are compositionally biased toward low complexity: residues S211–T230 and S238–A248.

Belongs to the UPRTase family. Requires Mg(2+) as cofactor.

The enzyme catalyses UMP + diphosphate = 5-phospho-alpha-D-ribose 1-diphosphate + uracil. The protein operates within pyrimidine metabolism; UMP biosynthesis via salvage pathway; UMP from uracil: step 1/1. Its activity is regulated as follows. Allosterically activated by GTP. Functionally, catalyzes the conversion of uracil and 5-phospho-alpha-D-ribose 1-diphosphate (PRPP) to UMP and diphosphate. The sequence is that of Uracil phosphoribosyltransferase from Mycolicibacterium paratuberculosis (strain ATCC BAA-968 / K-10) (Mycobacterium paratuberculosis).